The primary structure comprises 272 residues: Large ribosomal subunit protein uL3 (272 aa).

A disordered region spans residues 125–146; sequence QHIGPKSHGGGGGSQPLRQTGS.

It belongs to the universal ribosomal protein uL3 family. Part of the 50S ribosomal subunit. Forms a cluster with proteins L14 and L19.

Its function is as follows. One of the primary rRNA binding proteins, it binds directly near the 3'-end of the 23S rRNA, where it nucleates assembly of the 50S subunit. The chain is Large ribosomal subunit protein uL3 from Metamycoplasma arthritidis (strain 158L3-1) (Mycoplasma arthritidis).